Here is a 64-residue protein sequence, read N- to C-terminus: UPF0370 protein YPA_2246 (64 aa).

Residues 3-23 traverse the membrane as a helical segment; sequence WLADYWWIILILLVGMILNGI. Residues 36-47 are compositionally biased toward basic and acidic residues; that stretch reads DNKPELPPHRDN. Positions 36-64 are disordered; the sequence is DNKPELPPHRDNNAQWDDEDDWPDQNKKK.

This sequence belongs to the UPF0370 family.

It localises to the cell membrane. The polypeptide is UPF0370 protein YPA_2246 (Yersinia pestis bv. Antiqua (strain Antiqua)).